The primary structure comprises 196 residues: Peptidyl-tRNA hydrolase (196 aa).

Tyr18 provides a ligand contact to tRNA. His23 acts as the Proton acceptor in catalysis. Residues Phe69, Asn71, and Asn117 each coordinate tRNA.

It belongs to the PTH family. Monomer.

It localises to the cytoplasm. The catalysed reaction is an N-acyl-L-alpha-aminoacyl-tRNA + H2O = an N-acyl-L-amino acid + a tRNA + H(+). Hydrolyzes ribosome-free peptidyl-tRNAs (with 1 or more amino acids incorporated), which drop off the ribosome during protein synthesis, or as a result of ribosome stalling. Functionally, catalyzes the release of premature peptidyl moieties from peptidyl-tRNA molecules trapped in stalled 50S ribosomal subunits, and thus maintains levels of free tRNAs and 50S ribosomes. The protein is Peptidyl-tRNA hydrolase of Marinobacter nauticus (strain ATCC 700491 / DSM 11845 / VT8) (Marinobacter aquaeolei).